We begin with the raw amino-acid sequence, 115 residues long: Replication initiation control protein YabA (115 aa).

Positions 90, 92, 106, and 109 each coordinate Zn(2+).

Belongs to the YabA family. In terms of assembly, homotetramer. Interacts with both DnaA and DnaN, acting as a bridge between these two proteins. Zn(2+) is required as a cofactor.

It is found in the cytoplasm. The protein localises to the nucleoid. Functionally, involved in control of chromosome replication initiation. Inhibits the cooperative binding of DnaA to the oriC region, thus negatively regulating initiation of chromosome replication. Inhibits the ability of DnaA-ATP to form a helix on DNA; does not disassemble preformed DnaA-DNA helices. Decreases the residence time of DnaA on the chromosome at its binding sites (oriC, replication forks and promoter-binding sites). Tethers DnaA to the replication machinery via the DNA polymerase beta sliding clamp subunit (dnaN). Associates with oriC and other DnaA targets on the chromosome in a DnaA-dependent manner. This chain is Replication initiation control protein YabA, found in Staphylococcus epidermidis (strain ATCC 35984 / DSM 28319 / BCRC 17069 / CCUG 31568 / BM 3577 / RP62A).